A 396-amino-acid chain; its full sequence is Polygalacturonase (396 aa).

The N-terminal stretch at 1–22 (MDLKFKVHFALVLLFLAHFGES) is a signal peptide. 6 N-linked (GlcNAc...) asparagine glycosylation sites follow: asparagine 143, asparagine 151, asparagine 174, asparagine 181, asparagine 203, and asparagine 208. PbH1 repeat units follow at residues 172–198 (CKNL…HVSR) and 199–220 (SSSV…SVGD). Residue aspartate 213 is the Proton donor of the active site. Cysteines 215 and 232 form a disulfide. Residue histidine 236 is part of the active site. 3 PbH1 repeats span residues 252 to 273 (VVGV…RIKT), 282 to 303 (VNDV…VIDQ), and 316 to 356 (PSQV…EVGD). 2 N-linked (GlcNAc...) asparagine glycosylation sites follow: asparagine 259 and asparagine 294. The tract at residues 364–396 (KEGPAKSSCENIKPSLKGKQNPPVCTASAASSS) is disordered. Cysteines 372 and 388 form a disulfide.

Belongs to the glycosyl hydrolase 28 family. In terms of tissue distribution, pollen.

The protein localises to the secreted. Its subcellular location is the cell wall. It catalyses the reaction (1,4-alpha-D-galacturonosyl)n+m + H2O = (1,4-alpha-D-galacturonosyl)n + (1,4-alpha-D-galacturonosyl)m.. Functionally, may function in depolymerizing pectin during pollen development, germination, and tube growth. The protein is Polygalacturonase (PG1) of Nicotiana tabacum (Common tobacco).